The following is a 218-amino-acid chain: N-(5'-phosphoribosyl)anthranilate isomerase (218 aa).

Belongs to the TrpF family.

The enzyme catalyses N-(5-phospho-beta-D-ribosyl)anthranilate = 1-(2-carboxyphenylamino)-1-deoxy-D-ribulose 5-phosphate. It functions in the pathway amino-acid biosynthesis; L-tryptophan biosynthesis; L-tryptophan from chorismate: step 3/5. The chain is N-(5'-phosphoribosyl)anthranilate isomerase from Rhodospirillum rubrum (strain ATCC 11170 / ATH 1.1.1 / DSM 467 / LMG 4362 / NCIMB 8255 / S1).